Consider the following 291-residue polypeptide: Elongation factor Ts (291 aa).

Positions 82–85 (TDFC) are involved in Mg(2+) ion dislocation from EF-Tu.

The protein belongs to the EF-Ts family.

Its subcellular location is the cytoplasm. Its function is as follows. Associates with the EF-Tu.GDP complex and induces the exchange of GDP to GTP. It remains bound to the aminoacyl-tRNA.EF-Tu.GTP complex up to the GTP hydrolysis stage on the ribosome. The sequence is that of Elongation factor Ts from Methylobacillus flagellatus (strain ATCC 51484 / DSM 6875 / VKM B-1610 / KT).